The primary structure comprises 597 residues: Lipoprotein LpqB (597 aa).

A signal peptide spans 1 to 28 (MTPGSRSAMRSRSVCGAIALAVLVTVSG). Cys29 carries the N-palmitoyl cysteine lipid modification. A lipid anchor (S-diacylglycerol cysteine) is attached at Cys29. Over residues 39–51 (QAIGTINRDSPGS) the composition is skewed to polar residues. The interval 39-59 (QAIGTINRDSPGSSVAAPAPG) is disordered.

It belongs to the LpqB lipoprotein family.

It is found in the cell membrane. This Rhodococcus opacus (strain B4) protein is Lipoprotein LpqB.